The chain runs to 60 residues: Large ribosomal subunit protein bL32 (60 aa).

It belongs to the bacterial ribosomal protein bL32 family.

In Borrelia hermsii (strain HS1 / DAH), this protein is Large ribosomal subunit protein bL32.